The following is a 207-amino-acid chain: Small ribosomal subunit protein uS4 (207 aa).

Positions 96–156 constitute an S4 RNA-binding domain; it reads RRLDNVVYRL…EKFKTSSFIA (61 aa).

This sequence belongs to the universal ribosomal protein uS4 family. In terms of assembly, part of the 30S ribosomal subunit. Contacts protein S5. The interaction surface between S4 and S5 is involved in control of translational fidelity.

One of the primary rRNA binding proteins, it binds directly to 16S rRNA where it nucleates assembly of the body of the 30S subunit. Its function is as follows. With S5 and S12 plays an important role in translational accuracy. This chain is Small ribosomal subunit protein uS4, found in Leptospira interrogans serogroup Icterohaemorrhagiae serovar copenhageni (strain Fiocruz L1-130).